The following is a 157-amino-acid chain: MKVELCSFSGYKIYPGHGRRYARIDGKVFQFLNAKCESAFLAKRNPRQINWTVLYRRKHKKGQSEEVTKKRTRRAVKFQRAITGASLAEIMAKRNQKPEVRKAQREQAIRAAKESKKAKQATKKPAAASAKTSAKTAQKPKIAKPMKISAPRVGGKR.

The disordered stretch occupies residues 94–157 (RNQKPEVRKA…ISAPRVGGKR (64 aa)). Residues 96 to 117 (QKPEVRKAQREQAIRAAKESKK) are compositionally biased toward basic and acidic residues. Low complexity predominate over residues 123-140 (KKPAAASAKTSAKTAQKP).

The protein belongs to the eukaryotic ribosomal protein eL24 family. In terms of assembly, component of the large ribosomal subunit.

The protein localises to the cytoplasm. In terms of biological role, component of the large ribosomal subunit. The ribosome is a large ribonucleoprotein complex responsible for the synthesis of proteins in the cell. The sequence is that of Large ribosomal subunit protein eL24 (rpl24) from Gillichthys mirabilis (Long-jawed mudsucker).